A 183-amino-acid polypeptide reads, in one-letter code: NADH-quinone oxidoreductase subunit I (183 aa).

4Fe-4S ferredoxin-type domains lie at 71 to 100 and 117 to 146; these read KRDE…MKAA and EIYE…LTTS. The [4Fe-4S] cluster site is built by C80, C83, C86, C90, C126, C129, C132, and C136.

This sequence belongs to the complex I 23 kDa subunit family. As to quaternary structure, NDH-1 is composed of 14 different subunits. Subunits NuoA, H, J, K, L, M, N constitute the membrane sector of the complex. [4Fe-4S] cluster serves as cofactor.

Its subcellular location is the cell inner membrane. It catalyses the reaction a quinone + NADH + 5 H(+)(in) = a quinol + NAD(+) + 4 H(+)(out). In terms of biological role, NDH-1 shuttles electrons from NADH, via FMN and iron-sulfur (Fe-S) centers, to quinones in the respiratory chain. The immediate electron acceptor for the enzyme in this species is believed to be ubiquinone. Couples the redox reaction to proton translocation (for every two electrons transferred, four hydrogen ions are translocated across the cytoplasmic membrane), and thus conserves the redox energy in a proton gradient. The polypeptide is NADH-quinone oxidoreductase subunit I (Flavobacterium psychrophilum (strain ATCC 49511 / DSM 21280 / CIP 103535 / JIP02/86)).